Consider the following 501-residue polypeptide: MKVGFDHKKYLEEQSKYILERVNNFDKLYLEFGGKLMGDLHAKRVLPGFDENAKIKVLQHMKEKVEVVICVYAGDIERNKIRGDFGITYDMEVLRLIDDLRGYELDVNSVVITRFEGQPATTVFINKLERRGIKVYKHYPTKGYPSDVETIVSDEGYGANEYIETTKPIVVVTAPGPNSGKLGTCLSQLYHENKRGNVVGYSKFETFPVWNVPVKHPLNIAYEAATVDLKDVNMIDSFHLETYGEMSVNYNRDLELFPVLKKIIEKITGKESIFQSPTDMGVNRVGFGIIDDEVIRKASIEEIIRRYFKTACEYKKGQVDKGAYDRMKMIMEELNLKPEDRNVVLPARNYSNKLKESADKNDTCPVVALELEDGTILTGKGSDLMNGTAAVVLNAIKHLANISDDMHLISPVILEPIINLKTKTLASRNVSLSCQEVLTALSICAVTNPTAQFAMEKLALLKGCQAHSTTILNRDDEQTFRKLGIDVTCDPEYPSQNLYYS.

This sequence belongs to the UPF0371 family.

In Clostridioides difficile (strain 630) (Peptoclostridium difficile), this protein is UPF0371 protein CD630_08980.